We begin with the raw amino-acid sequence, 429 residues long: Asparagine--tRNA ligase (429 aa).

Belongs to the class-II aminoacyl-tRNA synthetase family. Homodimer.

Its subcellular location is the cytoplasm. It catalyses the reaction tRNA(Asn) + L-asparagine + ATP = L-asparaginyl-tRNA(Asn) + AMP + diphosphate + H(+). The chain is Asparagine--tRNA ligase from Desulforamulus reducens (strain ATCC BAA-1160 / DSM 100696 / MI-1) (Desulfotomaculum reducens).